The sequence spans 267 residues: Dichloromethane dehalogenase (267 aa).

The 83-residue stretch at T3–S85 folds into the GST N-terminal domain. The GST C-terminal domain maps to T91–Y224.

This sequence belongs to the GST superfamily. Homohexamer.

The protein resides in the cytoplasm. The catalysed reaction is dichloromethane + H2O = formaldehyde + 2 chloride + 2 H(+). Its pathway is xenobiotic degradation; dichloromethane degradation. The polypeptide is Dichloromethane dehalogenase (dcmA) (Methylophilus leisingeri (strain DSM 6813 / VKM B-2013 / DM11)).